The chain runs to 178 residues: MARPDTVIPDKPESPYPIVQDSVVVSGFGRGSSELGIPTANIPINDDLNQLETGIYYGWCQLKPCTLPDECKTRTNGREVIYNHGKNLRNDDLKVLPMVMSIGWNPFYHLKEKAAEVHIMHKFDDFFYGAQIKFNVLGYIRPELDYTTKEALIEDINLDIKIALEALDRDAYQTYKDL.

The Mg(2+) site is built by Thr-39 and Asn-41. Residue Glu-116 is the Nucleophile of the active site.

The protein belongs to the flavokinase family. Zn(2+) is required as a cofactor. Mg(2+) serves as cofactor.

It catalyses the reaction riboflavin + ATP = FMN + ADP + H(+). It participates in cofactor biosynthesis; FMN biosynthesis; FMN from riboflavin (ATP route): step 1/1. Functionally, catalyzes the phosphorylation of riboflavin (vitamin B2) to form flavin mononucleotide (FMN) coenzyme. This is Riboflavin kinase (FMN1) from Scheffersomyces stipitis (strain ATCC 58785 / CBS 6054 / NBRC 10063 / NRRL Y-11545) (Yeast).